The chain runs to 1481 residues: Cystic fibrosis transmembrane conductance regulator (1481 aa).

At 1-77 the chain is on the cytoplasmic side; it reads MQKSPLEKAG…KLINALRRCF (77 aa). A helical membrane pass occupies residues 78–98; that stretch reads FWRFMFYGILLYLGEVTKAVQ. Residues 81–365 form the ABC transmembrane type-1 1 domain; it reads FMFYGILLYL…WAVQTWYDSL (285 aa). The Extracellular portion of the chain corresponds to 99–122; that stretch reads PLLLGRIIASYDPDNKVERSIAIY. Residues 123–146 traverse the membrane as a helical segment; sequence LGIGLCLLFVVRTLLLHPAIFGLH. The Cytoplasmic portion of the chain corresponds to 147–195; that stretch reads HIGMQMRIAMFSLIYKKTLKLSSRVLDKISIGQLISLLSNNLNKFDEGL. A helical transmembrane segment spans residues 196-216; it reads ALAHFVWISPLQVTLLMGLLW. Over 217-222 the chain is Extracellular; that stretch reads ELLQAS. Residues 223 to 243 form a helical membrane-spanning segment; the sequence is AFCGLAFLIVLALVQAGLGRM. Residues 244-298 lie on the Cytoplasmic side of the membrane; that stretch reads MMKYRDQRAGKINERLVITSEMIENIQSVKAYCWEEAMEKMIENLRQTELKLTRK. A helical membrane pass occupies residues 299–319; sequence AAYVRYFNSSAFFFSGFFVVF. Topologically, residues 320-339 are extracellular; the sequence is LSVLPYALTKGIILRKIFTT. A helical transmembrane segment spans residues 340-358; sequence ISFCIVLRMAVTRQFPWAV. The Cytoplasmic segment spans residues 359–858; sequence QTWYDSLGAI…YLRYITVHRS (500 aa). ATP-binding positions include Trp401, Ser434, 458-465, and Gln493; that span reads GSTGAGKT. Positions 423–646 constitute an ABC transporter 1 domain; the sequence is NGDNNLFFSN…RPDFSSKLMG (224 aa). Residue Cys524 is the site of S-palmitoyl cysteine attachment. A phosphoserine mark is found at Ser549 and Ser660. Residues 654 to 831 form a disordered R region region; that stretch reads SAERRNSILT…EEINEEDLKE (178 aa). Ser670 carries the post-translational modification Phosphoserine; by PKA. At Ser686 the chain carries Phosphoserine. A Glycyl lysine isopeptide (Lys-Gly) (interchain with G-Cter in ubiquitin) cross-link involves residue Lys688. Phosphoserine occurs at positions 700 and 712. A Phosphothreonine modification is found at Thr717. Residues Ser737, Ser768, Ser790, Ser795, and Ser813 each carry the phosphoserine modification. The helical transmembrane segment at 859-879 threads the bilayer; the sequence is LIFVLIWCIVIFLAEVAASLV. The ABC transmembrane type-1 2 domain maps to 859–1155; that stretch reads LIFVLIWCIV…AVNSSIDVDS (297 aa). Residues 880-918 lie on the Extracellular side of the membrane; it reads VLWLFGNTAPQDKENSTKSGNSSYAVIITNTSSYYFFYI. Residues Asn894, Asn900, and Asn909 are each glycosylated (N-linked (GlcNAc...) asparagine). Residues 919–939 form a discontinuously helical membrane-spanning segment; it reads YVGVADTLLALGLFRGLPLVH. The Cytoplasmic segment spans residues 940-990; sequence TLITVSKILHHKMLHSVLQAPMSTLNTLKAGGILNRFSKDIAILDDLLPLT. The chain crosses the membrane as a helical span at residues 991 to 1011; the sequence is IFDFIQLLLIVVGAIAVVSVL. Topologically, residues 1012 to 1013 are extracellular; sequence QP. A helical transmembrane segment spans residues 1014–1034; that stretch reads YIFLATVPVIAAFILLRAYFL. At 1035–1095 the chain is on the cytoplasmic side; sequence HTSQQLKQLE…TANWFLYLST (61 aa). A helical transmembrane segment spans residues 1096 to 1116; that stretch reads LRWFQMRIEMIFVLFFIAVAF. Residues 1117–1130 lie on the Extracellular side of the membrane; it reads ISILTTGEGEGRVG. A helical membrane pass occupies residues 1131-1151; it reads IILTLAMNIMSTLQWAVNSSI. Residues 1152–1481 are Cytoplasmic-facing; that stretch reads DVDSLMRSVS…AEEEVQGTRL (330 aa). An ABC transporter 2 domain is found at 1199–1444; sequence VKKDDVWPSG…KSLFRQAISS (246 aa). Residues Tyr1220 and 1245 to 1252 contribute to the ATP site; that span reads GRTGSGKS. The segment at 1387–1481 is interaction with GORASP2; the sequence is RTLKQAFADC…AEEEVQGTRL (95 aa). A lipid anchor (S-palmitoyl cysteine) is attached at Cys1396. 2 positions are modified to phosphoserine: Ser1445 and Ser1457. The disordered stretch occupies residues 1449 to 1481; sequence KLFPHRNSSKHKSRPQITALKEEAEEEVQGTRL. The span at 1450–1462 shows a compositional bias: basic residues; sequence LFPHRNSSKHKSR. The span at 1471 to 1481 shows a compositional bias: acidic residues; the sequence is EAEEEVQGTRL. The PDZ-binding signature appears at 1479–1481; it reads TRL.

Belongs to the ABC transporter superfamily. ABCC family. CFTR transporter (TC 3.A.1.202) subfamily. As to quaternary structure, monomer; does not require oligomerization for channel activity. May form oligomers in the membrane. Interacts with SLC26A3, SLC26A6 and NHERF1. Interacts with SHANK2. Interacts with MYO6. Interacts (via C-terminus) with GOPC (via PDZ domain); this promotes CFTR internalization and thereby decreases channel activity. Interacts with SLC4A7 through NHERF1. Found in a complex with MYO5B and RAB11A. Interacts with ANO1. Interacts with SLC26A8. Interacts with AHCYL1; the interaction increases CFTR activity. Interacts with CSE1L. The core-glycosylated form interacts with GORASP2 (via PDZ GRASP-type 1 domain) in respone to ER stress. Interacts with MARCHF2; the interaction leads to CFTR ubiqtuitination and degradation. Interacts with ADGRG2. In terms of processing, N-glycosylated. Phosphorylated; cAMP treatment promotes phosphorylation and activates the channel. Dephosphorylation decreases the ATPase activity (in vitro). Phosphorylation at PKA sites activates the channel. Phosphorylation at PKC sites enhances the response to phosphorylation by PKA. Phosphorylated by AMPK; this inhibits channel activity. Post-translationally, ubiquitinated, leading to its degradation in the lysosome. Deubiquitination by USP10 in early endosomes enhances its endocytic recycling to the cell membrane. Ubiquitinated by RNF185 during ER stress. Ubiquitinated by MARCHF2. As to expression, isoform 1 is expressed in the pancreas. Isoform 2 is specifically expressed in the ventricle.

Its subcellular location is the apical cell membrane. It is found in the early endosome membrane. It localises to the cell membrane. The protein resides in the recycling endosome membrane. The protein localises to the endoplasmic reticulum membrane. Its subcellular location is the nucleus. It catalyses the reaction ATP + H2O + closed Cl(-) channel = ADP + phosphate + open Cl(-) channel.. The catalysed reaction is chloride(in) = chloride(out). It carries out the reaction hydrogencarbonate(in) = hydrogencarbonate(out). The enzyme catalyses ATP + H2O = ADP + phosphate + H(+). Epithelial ion channel that plays an important role in the regulation of epithelial ion and water transport and fluid homeostasis. Mediates the transport of chloride ions across the cell membrane. Possesses an intrinsic ATPase activity and utilizes ATP to gate its channel; the passive flow of anions through the channel is gated by cycles of ATP binding and hydrolysis by the ATP-binding domains. The ion channel is also permeable to HCO(3)(-); selectivity depends on the extracellular chloride concentration. Exerts its function also by modulating the activity of other ion channels and transporters. Contributes to the regulation of the pH and the ion content of the epithelial fluid layer. Modulates the activity of the epithelial sodium channel (ENaC) complex, in part by regulating the cell surface expression of the ENaC complex. May regulate bicarbonate secretion and salvage in epithelial cells by regulating the transporter SLC4A7. Can inhibit the chloride channel activity of ANO1. Plays a role in the chloride and bicarbonate homeostasis during sperm epididymal maturation and capacitation. This is Cystic fibrosis transmembrane conductance regulator from Oryctolagus cuniculus (Rabbit).